A 427-amino-acid polypeptide reads, in one-letter code: Adenylosuccinate synthetase (427 aa).

GTP-binding positions include 12-18 (GDEGKGK) and 40-42 (GHT). The active-site Proton acceptor is the D13. Residues D13 and G40 each coordinate Mg(2+). Residues 13–16 (DEGK), 38–41 (NAGH), T128, R142, Q223, T238, and R302 contribute to the IMP site. H41 acts as the Proton donor in catalysis. 298–304 (TTTGRAR) lines the substrate pocket. GTP contacts are provided by residues R304, 330–332 (KLD), and 412–414 (AVG).

The protein belongs to the adenylosuccinate synthetase family. In terms of assembly, homodimer. Requires Mg(2+) as cofactor.

The protein resides in the cytoplasm. It catalyses the reaction IMP + L-aspartate + GTP = N(6)-(1,2-dicarboxyethyl)-AMP + GDP + phosphate + 2 H(+). The protein operates within purine metabolism; AMP biosynthesis via de novo pathway; AMP from IMP: step 1/2. In terms of biological role, plays an important role in the de novo pathway of purine nucleotide biosynthesis. Catalyzes the first committed step in the biosynthesis of AMP from IMP. The sequence is that of Adenylosuccinate synthetase from Desulfitobacterium hafniense (strain Y51).